Consider the following 144-residue polypeptide: Large ribosomal subunit protein uL15 (144 aa).

Residues 1 to 51 (MELNSIKPGSGSKHAKRRVGRGIGSGLGKTAGRGHKGQKSRAGGYHKVGFE) are disordered. The segment covering 21 to 31 (RGIGSGLGKTA) has biased composition (gly residues).

Belongs to the universal ribosomal protein uL15 family. As to quaternary structure, part of the 50S ribosomal subunit.

Functionally, binds to the 23S rRNA. The protein is Large ribosomal subunit protein uL15 of Leptothrix cholodnii (strain ATCC 51168 / LMG 8142 / SP-6) (Leptothrix discophora (strain SP-6)).